Here is a 100-residue protein sequence, read N- to C-terminus: Putative pterin-4-alpha-carbinolamine dehydratase (100 aa).

This sequence belongs to the pterin-4-alpha-carbinolamine dehydratase family.

It catalyses the reaction (4aS,6R)-4a-hydroxy-L-erythro-5,6,7,8-tetrahydrobiopterin = (6R)-L-erythro-6,7-dihydrobiopterin + H2O. This Afipia carboxidovorans (strain ATCC 49405 / DSM 1227 / KCTC 32145 / OM5) (Oligotropha carboxidovorans) protein is Putative pterin-4-alpha-carbinolamine dehydratase.